We begin with the raw amino-acid sequence, 295 residues long: MSGALDVLQMKEEDVLKFLAAGTHLGGTNLDFQMEHYIYKRKSDGIYIINLKRTWEKLLLAARAIVAIENPADVSVISSRNTGQRAVLKFAAATGATPIAGRFTPGTFTNQIQAAFWEPRLLVVTDPRADHQPLTEASYVNLPTIALCNTDSPLRYVDIAIPCNNKGAHSVGLMWWMLAREVLRMRGTISREHPWEVMPDLYFYRDPEEIEKEEQAAAEKAVTKEEFQGEWTAPSPEFTATQPEVADWSEGVQVPSVPIQQFPTEDWSAQPATEDWSAAPTAQATEWVGATTDWS.

Ser-2 bears the N-acetylserine mark. The tract at residues 54-113 (TWEKLLLAARAIVAIENPADVSVISSRNTGQRAVLKFAAATGATPIAGRFTPGTFTNQIQ) is interaction with PPP1R16B. Laminin-binding regions lie at residues 161-180 (IPCN…MLAR) and 205-229 (RDPE…EFQG). A compositionally biased stretch (basic and acidic residues) spans 218 to 227 (AEKAVTKEEF). The disordered stretch occupies residues 218–242 (AEKAVTKEEFQGEWTAPSPEFTATQ). [DE]-W-[ST] repeat units lie at residues 230–232 (EWT), 247–249 (DWS), 266–268 (DWS), 275–277 (DWS), and 293–295 (DWS). The laminin-binding stretch occupies residues 242-295 (QPEVADWSEGVQVPSVPIQQFPTEDWSAQPATEDWSAAPTAQATEWVGATTDWS). Residues 266–295 (DWSAQPATEDWSAAPTAQATEWVGATTDWS) form a disordered region.

Belongs to the universal ribosomal protein uS2 family. As to quaternary structure, monomer (37LRP) and homodimer (67LR). Component of the small ribosomal subunit. Mature ribosomes consist of a small (40S) and a large (60S) subunit. The 40S subunit contains about 33 different proteins and 1 molecule of RNA (18S). The 60S subunit contains about 49 different proteins and 3 molecules of RNA (28S, 5.8S and 5S). Interacts with RPS21. Interacts with several laminins including at least LAMB1. Interacts with MDK. The mature dimeric form interacts with PPP1R16B (via its fourth ankyrin repeat). Interacts with PPP1CA only in the presence of PPP1R16B. In terms of processing, acylated. Acylation may be a prerequisite for conversion of the monomeric 37 kDa laminin receptor precursor (37LRP) to the mature dimeric 67 kDa laminin receptor (67LR), and may provide a mechanism for membrane association. Post-translationally, cleaved by stromelysin-3 (ST3) at the cell surface. Cleavage by stromelysin-3 may be a mechanism to alter cell-extracellular matrix interactions.

The protein localises to the cell membrane. It is found in the cytoplasm. It localises to the nucleus. In terms of biological role, required for the assembly and/or stability of the 40S ribosomal subunit. Required for the processing of the 20S rRNA-precursor to mature 18S rRNA in a late step of the maturation of 40S ribosomal subunits. Also functions as a cell surface receptor for laminin. Plays a role in cell adhesion to the basement membrane and in the consequent activation of signaling transduction pathways. May play a role in cell fate determination and tissue morphogenesis. Also acts as a receptor for several other ligands, including the pathogenic prion protein, viruses, and bacteria. Acts as a PPP1R16B-dependent substrate of PPP1CA. This is Small ribosomal subunit protein uS2B from Homo sapiens (Human).